The sequence spans 189 residues: Interferon alpha-B (189 aa).

A signal peptide spans 1 to 23 (MAPAWSFLLALLLLSCNAICSLG). Cystine bridges form between cysteine 24–cysteine 122 and cysteine 52–cysteine 162.

Belongs to the alpha/beta interferon family.

It is found in the secreted. Its function is as follows. Produced by macrophages, IFN-alpha have antiviral activities. Interferon stimulates the production of two enzymes: a protein kinase and an oligoadenylate synthetase. The polypeptide is Interferon alpha-B (IFNAB) (Bos taurus (Bovine)).